A 155-amino-acid polypeptide reads, in one-letter code: Ribosome maturation factor RimP (155 aa).

Belongs to the RimP family.

The protein localises to the cytoplasm. Functionally, required for maturation of 30S ribosomal subunits. This chain is Ribosome maturation factor RimP, found in Listeria welshimeri serovar 6b (strain ATCC 35897 / DSM 20650 / CCUG 15529 / CIP 8149 / NCTC 11857 / SLCC 5334 / V8).